We begin with the raw amino-acid sequence, 321 residues long: DNA repair and recombination protein RadA (321 aa).

Gly-111 to Thr-118 provides a ligand contact to ATP.

Belongs to the eukaryotic RecA-like protein family.

Involved in DNA repair and in homologous recombination. Binds and assemble on single-stranded DNA to form a nucleoprotein filament. Hydrolyzes ATP in a ssDNA-dependent manner and promotes DNA strand exchange between homologous DNA molecules. This Sulfolobus acidocaldarius (strain ATCC 33909 / DSM 639 / JCM 8929 / NBRC 15157 / NCIMB 11770) protein is DNA repair and recombination protein RadA.